A 103-amino-acid chain; its full sequence is Putative membrane protein insertion efficiency factor (103 aa).

The protein belongs to the UPF0161 family.

It is found in the cell inner membrane. Its function is as follows. Could be involved in insertion of integral membrane proteins into the membrane. This chain is Putative membrane protein insertion efficiency factor, found in Chlamydia felis (strain Fe/C-56) (Chlamydophila felis).